The primary structure comprises 61 residues: Small ribosomal subunit protein uS14 (61 aa).

Zn(2+) is bound by residues C24, C27, C40, and C43.

It belongs to the universal ribosomal protein uS14 family. Zinc-binding uS14 subfamily. In terms of assembly, part of the 30S ribosomal subunit. Contacts proteins S3 and S10. It depends on Zn(2+) as a cofactor.

Binds 16S rRNA, required for the assembly of 30S particles and may also be responsible for determining the conformation of the 16S rRNA at the A site. This chain is Small ribosomal subunit protein uS14, found in Rhodopirellula baltica (strain DSM 10527 / NCIMB 13988 / SH1).